The primary structure comprises 241 residues: Ribosome assembly factor mrt4 (241 aa).

It belongs to the universal ribosomal protein uL10 family. As to quaternary structure, associates with the pre-60S ribosomal particle.

The protein resides in the nucleus. It is found in the nucleolus. Its subcellular location is the cytoplasm. In terms of biological role, component of the ribosome assembly machinery. Nuclear paralog of the ribosomal protein P0, it binds pre-60S subunits at an early stage of assembly in the nucleolus, and is replaced by P0 in cytoplasmic pre-60S subunits and mature 80S ribosomes. This chain is Ribosome assembly factor mrt4, found in Schizosaccharomyces pombe (strain 972 / ATCC 24843) (Fission yeast).